Consider the following 485-residue polypeptide: N-succinylglutamate 5-semialdehyde dehydrogenase (485 aa).

220–225 contacts NAD(+); the sequence is GSANTG. Catalysis depends on residues Glu-243 and Cys-278.

This sequence belongs to the aldehyde dehydrogenase family. AstD subfamily.

It carries out the reaction N-succinyl-L-glutamate 5-semialdehyde + NAD(+) + H2O = N-succinyl-L-glutamate + NADH + 2 H(+). It functions in the pathway amino-acid degradation; L-arginine degradation via AST pathway; L-glutamate and succinate from L-arginine: step 4/5. Functionally, catalyzes the NAD-dependent reduction of succinylglutamate semialdehyde into succinylglutamate. This Aliivibrio fischeri (strain ATCC 700601 / ES114) (Vibrio fischeri) protein is N-succinylglutamate 5-semialdehyde dehydrogenase.